Here is a 169-residue protein sequence, read N- to C-terminus: Putative antitoxin Rv0268c (169 aa).

The span at 1 to 11 shows a compositional bias: basic residues; sequence MGTRSKSRTRQ. Positions 1–35 are disordered; the sequence is MGTRSKSRTRQLKQSNGCTATTSGASDRRRRARRR. A coiled-coil region spans residues 120–153; it reads AAILISAERYESLMEELEDLRDRLSVHEREHVTM.

It belongs to the phD/YefM antitoxin family.

Functionally, putative antitoxin component of a type II toxin-antitoxin (TA) system; however the expected toxin coding sequence is not found adjacent to this gene. The sequence is that of Putative antitoxin Rv0268c from Mycobacterium tuberculosis (strain ATCC 25618 / H37Rv).